The following is a 394-amino-acid chain: Aromatic aminotransferase ISS1 (394 aa).

Gly-2 carries the N-acetylglycine modification. Gly-38 is a binding site for substrate. Residues Tyr-64, 98–99 (AN), Tyr-123, Asn-176, Tyr-207, and 230–232 (SFS) contribute to the pyridoxal 5'-phosphate site. Residues Tyr-123 and Asn-176 each contribute to the substrate site. Position 233 is an N6-(pyridoxal phosphate)lysine (Lys-233). Residue Arg-241 participates in pyridoxal 5'-phosphate binding. Arg-362 and Arg-374 together coordinate substrate.

Belongs to the class-I pyridoxal-phosphate-dependent aminotransferase family. In terms of assembly, homodimer. The cofactor is pyridoxal 5'-phosphate. Expressed in roots, cotyledons and flowers.

It is found in the cytoplasm. The catalysed reaction is a 2-oxocarboxylate + L-methionine = 4-methylsulfanyl-2-oxobutanoate + an L-alpha-amino acid. The enzyme catalyses L-tryptophan + 2-oxoglutarate = indole-3-pyruvate + L-glutamate. It carries out the reaction L-tyrosine + 2-oxoglutarate = 3-(4-hydroxyphenyl)pyruvate + L-glutamate. In terms of biological role, coordinates and prevents auxin (IAA) and ethylene biosynthesis, thus regulating auxin homeostasis in young seedlings. Shows aminotransferase activity with methionine; can use the ethylene biosynthetic intermediate L-methionine (L-Met) as an amino donor and the auxin biosynthetic intermediate, indole-3-pyruvic acid (3-IPA) as an amino acceptor to produce L-tryptophan (L-Trp) and 2-oxo-4-methylthiobutyric acid (KMBA). Can also use tryptophan (Trp), phenylalanine (Phe), and tyrosine (Tyr) as substrates. Regulates tryptophan (Trp) homeostasis and catabolism in mature plants. Also possibly involved in the metabolism of other aromatic amino acids and phenylpropanoid homeostasis. The polypeptide is Aromatic aminotransferase ISS1 (Arabidopsis thaliana (Mouse-ear cress)).